Reading from the N-terminus, the 71-residue chain is Large ribosomal subunit protein bL31 (71 aa).

Residues C16, C18, C36, and C39 each contribute to the Zn(2+) site.

It belongs to the bacterial ribosomal protein bL31 family. Type A subfamily. In terms of assembly, part of the 50S ribosomal subunit. Zn(2+) is required as a cofactor.

In terms of biological role, binds the 23S rRNA. The protein is Large ribosomal subunit protein bL31 of Thermotoga maritima (strain ATCC 43589 / DSM 3109 / JCM 10099 / NBRC 100826 / MSB8).